The primary structure comprises 530 residues: Bifunctional purine biosynthesis protein PurH (530 aa).

One can recognise an MGS-like domain in the interval 2–150 (TDHPRRVTRA…KNHDDVAVVV (149 aa)).

Belongs to the PurH family.

The catalysed reaction is (6R)-10-formyltetrahydrofolate + 5-amino-1-(5-phospho-beta-D-ribosyl)imidazole-4-carboxamide = 5-formamido-1-(5-phospho-D-ribosyl)imidazole-4-carboxamide + (6S)-5,6,7,8-tetrahydrofolate. It catalyses the reaction IMP + H2O = 5-formamido-1-(5-phospho-D-ribosyl)imidazole-4-carboxamide. It participates in purine metabolism; IMP biosynthesis via de novo pathway; 5-formamido-1-(5-phospho-D-ribosyl)imidazole-4-carboxamide from 5-amino-1-(5-phospho-D-ribosyl)imidazole-4-carboxamide (10-formyl THF route): step 1/1. It functions in the pathway purine metabolism; IMP biosynthesis via de novo pathway; IMP from 5-formamido-1-(5-phospho-D-ribosyl)imidazole-4-carboxamide: step 1/1. This Bradyrhizobium diazoefficiens (strain JCM 10833 / BCRC 13528 / IAM 13628 / NBRC 14792 / USDA 110) protein is Bifunctional purine biosynthesis protein PurH.